The sequence spans 845 residues: Putative DEAD-box ATP-dependent RNA helicase 33 (845 aa).

Disordered stretches follow at residues 129–149 (GHPD…PMSP) and 282–302 (KFRK…NEGK). The span at 289–298 (STEEDSDEEG) shows a compositional bias: acidic residues. The Q motif motif lies at 375 to 403 (KRFDESCISPLTLKALSASGIVKMTRVQD). In terms of domain architecture, Helicase ATP-binding spans 406 to 590 (LSECLDGKDA…QLVLKRDHSY (185 aa)). An ATP-binding site is contributed by 419 to 426 (AKTGTGKS). Residues 538 to 541 (DEAD) carry the DEAD box motif. A Helicase C-terminal domain is found at 624–778 (LLKEHINNMP…QVDQSMAKID (155 aa)).

The protein belongs to the DEAD box helicase family.

The enzyme catalyses ATP + H2O = ADP + phosphate + H(+). The polypeptide is Putative DEAD-box ATP-dependent RNA helicase 33 (RH33) (Arabidopsis thaliana (Mouse-ear cress)).